Reading from the N-terminus, the 396-residue chain is Subtilisin-like protease 5 (396 aa).

The first 20 residues, 1 to 20 (MTGFFTFLSFSLAALSVTNA), serve as a signal peptide directing secretion. Positions 21 to 116 (AHILSVPKGA…VEPDAIISQH (96 aa)) are excised as a propeptide. Residues 37 to 113 (YIVVMKDDTS…VAFVEPDAII (77 aa)) enclose the Inhibitor I9 domain. Asn63 carries an N-linked (GlcNAc...) asparagine glycan. The region spanning 125-396 (PWGLSRLSNR…SRLLYNGSGR (272 aa)) is the Peptidase S8 domain. Catalysis depends on charge relay system residues Asp156 and His187. 2 N-linked (GlcNAc...) asparagine glycosylation sites follow: Asn230 and Asn248. Ser342 serves as the catalytic Charge relay system. The span at 376–389 (PTIRNPGPDTTSRL) shows a compositional bias: polar residues. Residues 376 to 396 (PTIRNPGPDTTSRLLYNGSGR) form a disordered region. Asn392 carries an N-linked (GlcNAc...) asparagine glycan.

The protein belongs to the peptidase S8 family.

Its subcellular location is the secreted. Functionally, secreted subtilisin-like serine protease with keratinolytic activity that contributes to pathogenicity. This Trichophyton tonsurans (Scalp ringworm fungus) protein is Subtilisin-like protease 5 (SUB5).